An 81-amino-acid chain; its full sequence is MNREGAPGKSPEEMYIQQKVRVLLMLRKMGSNLTANEEEFLRTYAGVVNSQLSQLPQHSIDQGAEDVVMAFSRSETEDRRQ.

At Ser59 the chain carries Phosphoserine.

This sequence belongs to the CTNNBIP1 family. In terms of assembly, binds CTNNB1.

The protein localises to the cytoplasm. The protein resides in the nucleus. Prevents the interaction between CTNNB1 and TCF family members, and acts as a negative regulator of the Wnt signaling pathway. The polypeptide is Beta-catenin-interacting protein 1 (CTNNBIP1) (Bos taurus (Bovine)).